The chain runs to 239 residues: Purine nucleoside phosphorylase DeoD-type (239 aa).

His-5 is an a purine D-ribonucleoside binding site. Phosphate-binding positions include Gly-21, Arg-25, Arg-44, and 88–91 (RVGS). A purine D-ribonucleoside is bound by residues 180-182 (EME) and 204-205 (SD). Catalysis depends on Asp-205, which acts as the Proton donor.

The protein belongs to the PNP/UDP phosphorylase family. In terms of assembly, homohexamer; trimer of homodimers.

The enzyme catalyses a purine D-ribonucleoside + phosphate = a purine nucleobase + alpha-D-ribose 1-phosphate. The catalysed reaction is a purine 2'-deoxy-D-ribonucleoside + phosphate = a purine nucleobase + 2-deoxy-alpha-D-ribose 1-phosphate. Functionally, catalyzes the reversible phosphorolytic breakdown of the N-glycosidic bond in the beta-(deoxy)ribonucleoside molecules, with the formation of the corresponding free purine bases and pentose-1-phosphate. The protein is Purine nucleoside phosphorylase DeoD-type of Citrobacter koseri (strain ATCC BAA-895 / CDC 4225-83 / SGSC4696).